We begin with the raw amino-acid sequence, 498 residues long: ATP synthase subunit beta, chloroplastic (498 aa).

172–179 (GGAGVGKT) is a binding site for ATP.

Belongs to the ATPase alpha/beta chains family. In terms of assembly, F-type ATPases have 2 components, CF(1) - the catalytic core - and CF(0) - the membrane proton channel. CF(1) has five subunits: alpha(3), beta(3), gamma(1), delta(1), epsilon(1). CF(0) has four main subunits: a(1), b(1), b'(1) and c(9-12).

The protein resides in the plastid. Its subcellular location is the chloroplast thylakoid membrane. The catalysed reaction is ATP + H2O + 4 H(+)(in) = ADP + phosphate + 5 H(+)(out). In terms of biological role, produces ATP from ADP in the presence of a proton gradient across the membrane. The catalytic sites are hosted primarily by the beta subunits. The polypeptide is ATP synthase subunit beta, chloroplastic (Populus trichocarpa (Western balsam poplar)).